The following is a 226-amino-acid chain: Fibrillarin-like rRNA/tRNA 2'-O-methyltransferase (226 aa).

S-adenosyl-L-methionine is bound by residues 82–83, 100–101, 125–126, and 145–148; these read TT, EF, DA, and DVAQ.

It belongs to the methyltransferase superfamily. Fibrillarin family. In terms of assembly, interacts with nop5. Component of box C/D small ribonucleoprotein (sRNP) particles that contain rpl7ae, FlpA and nop5, plus a guide RNA.

Involved in pre-rRNA and tRNA processing. Utilizes the methyl donor S-adenosyl-L-methionine to catalyze the site-specific 2'-hydroxyl methylation of ribose moieties in rRNA and tRNA. Site specificity is provided by a guide RNA that base pairs with the substrate. Methylation occurs at a characteristic distance from the sequence involved in base pairing with the guide RNA. This is Fibrillarin-like rRNA/tRNA 2'-O-methyltransferase from Methanosarcina barkeri (strain Fusaro / DSM 804).